Reading from the N-terminus, the 475-residue chain is Kynureninase (475 aa).

Residues Leu141, Thr142, 169 to 172 (FPSD), Asp254, His257, and Tyr279 contribute to the pyridoxal 5'-phosphate site. Lys280 carries the post-translational modification N6-(pyridoxal phosphate)lysine. Residues Trp319 and Asn347 each coordinate pyridoxal 5'-phosphate.

The protein belongs to the kynureninase family. Homodimer. It depends on pyridoxal 5'-phosphate as a cofactor.

The protein resides in the cytoplasm. It carries out the reaction L-kynurenine + H2O = anthranilate + L-alanine + H(+). The catalysed reaction is 3-hydroxy-L-kynurenine + H2O = 3-hydroxyanthranilate + L-alanine + H(+). The protein operates within amino-acid degradation; L-kynurenine degradation; L-alanine and anthranilate from L-kynurenine: step 1/1. It functions in the pathway cofactor biosynthesis; NAD(+) biosynthesis; quinolinate from L-kynurenine: step 2/3. Catalyzes the cleavage of L-kynurenine (L-Kyn) and L-3-hydroxykynurenine (L-3OHKyn) into anthranilic acid (AA) and 3-hydroxyanthranilic acid (3-OHAA), respectively. The sequence is that of Kynureninase (bna5) from Sclerotinia sclerotiorum (strain ATCC 18683 / 1980 / Ss-1) (White mold).